The chain runs to 187 residues: Ribosome-recycling factor (187 aa).

Belongs to the RRF family.

It is found in the cytoplasm. Functionally, responsible for the release of ribosomes from messenger RNA at the termination of protein biosynthesis. May increase the efficiency of translation by recycling ribosomes from one round of translation to another. The chain is Ribosome-recycling factor from Xanthobacter autotrophicus (strain ATCC BAA-1158 / Py2).